The primary structure comprises 144 residues: 3-dehydroquinate dehydratase (144 aa).

Tyrosine 22 serves as the catalytic Proton acceptor. Substrate contacts are provided by asparagine 73, histidine 79, and aspartate 86. Residue histidine 99 is the Proton donor of the active site. Residues isoleucine 100 to serine 101 and arginine 110 each bind substrate.

Belongs to the type-II 3-dehydroquinase family. In terms of assembly, homododecamer.

The catalysed reaction is 3-dehydroquinate = 3-dehydroshikimate + H2O. The protein operates within metabolic intermediate biosynthesis; chorismate biosynthesis; chorismate from D-erythrose 4-phosphate and phosphoenolpyruvate: step 3/7. Catalyzes a trans-dehydration via an enolate intermediate. The protein is 3-dehydroquinate dehydratase of Mycobacteroides abscessus (strain ATCC 19977 / DSM 44196 / CCUG 20993 / CIP 104536 / JCM 13569 / NCTC 13031 / TMC 1543 / L948) (Mycobacterium abscessus).